Here is a 672-residue protein sequence, read N- to C-terminus: Single-strand DNA endonuclease ASTE1 (672 aa).

An interaction with SHLD2 region spans residues 349–398 (TFLHTQVENMQRPNAHRISQPIRQIIYGLLLNGPSHAEDIAQNTLPSQLL).

The protein belongs to the asteroid family. Interacts with SHLD1, SHLD2, SHLD3, RIF1 and MAD2L2/REV7.

Functionally, structure-specific DNA endonuclease that specifically cleaves single-stranded DNA and 3' overhang DNA. Contributes to the control of DNA double-strand break repair choice by antagonizing BRCA1-dependent homologous recombination (HR) and promoting non-homologous end-joining (NHEJ). Recruited to the single-stranded DNA ends by SHLD2 and cleaves the 3' exposed DNA ends, therefore inhibiting DNA end resection (necessary for HR) and promoting DNA end protection (necessary for NHEJ). This is Single-strand DNA endonuclease ASTE1 (Aste1) from Mus musculus (Mouse).